The primary structure comprises 407 residues: tRNA-specific 2-thiouridylase MnmA (407 aa).

ATP contacts are provided by residues 20 to 27 (AMSGGVDS) and Leu-46. The Nucleophile role is filled by Cys-114. Cys-114 and Cys-210 form a disulfide bridge. Gly-138 contributes to the ATP binding site. The interaction with tRNA stretch occupies residues 160 to 162 (RDQ). The active-site Cysteine persulfide intermediate is Cys-210.

This sequence belongs to the MnmA/TRMU family.

Its subcellular location is the cytoplasm. The catalysed reaction is S-sulfanyl-L-cysteinyl-[protein] + uridine(34) in tRNA + AH2 + ATP = 2-thiouridine(34) in tRNA + L-cysteinyl-[protein] + A + AMP + diphosphate + H(+). Catalyzes the 2-thiolation of uridine at the wobble position (U34) of tRNA, leading to the formation of s(2)U34. The chain is tRNA-specific 2-thiouridylase MnmA from Bartonella tribocorum (strain CIP 105476 / IBS 506).